Consider the following 583-residue polypeptide: Protein disulfide-isomerase-like protein of the testis (583 aa).

An N-terminal signal peptide occupies residues 1-17 (MDLLWMPLLLVAARISA). N-linked (GlcNAc...) asparagine glycosylation is found at asparagine 58, asparagine 128, asparagine 160, and asparagine 340. A Thioredoxin domain is found at 388–451 (LVKQLVGKNF…IAKIDITAND (64 aa)). Composition is skewed to basic and acidic residues over residues 522–531 (EVPMMKKELP) and 540–559 (NVTK…KTSE). Residues 522–583 (EVPMMKKELP…KKKPKVKEEL (62 aa)) are disordered. N-linked (GlcNAc...) asparagine glycosylation occurs at asparagine 540. The segment covering 573 to 583 (QKKKPKVKEEL) has biased composition (basic residues). The Prevents secretion from ER motif lies at 580-583 (KEEL).

This sequence belongs to the protein disulfide isomerase family. Homodimer. The homodimer is not disulfide-linked. Interacts with ERO1A and CLGN. N-glycosylated.

Its subcellular location is the endoplasmic reticulum. Functionally, probable redox-inactive chaperone involved in spermatogenesis. The protein is Protein disulfide-isomerase-like protein of the testis (PDILT) of Macaca fascicularis (Crab-eating macaque).